The sequence spans 200 residues: MTLEITAAMVKDLREKTNVGMMDCKKALQETGGDLEKAVDLLRQKGLAKAMKRAGKEASEGMVHAYIHAGGRIGVLIEVNCETDFAAKSEDFVEFVKNVAMQVAATNPLGIVPEDISQDVVERERAIYLAQAQESGKPQNILEKMVEGKMRKFFEESTLLQQSYVKDPDKTIQDYLNELTASIGEKIIIRRFARFQLGSE.

An involved in Mg(2+) ion dislocation from EF-Tu region spans residues 83–86 (TDFA).

Belongs to the EF-Ts family.

Its subcellular location is the cytoplasm. In terms of biological role, associates with the EF-Tu.GDP complex and induces the exchange of GDP to GTP. It remains bound to the aminoacyl-tRNA.EF-Tu.GTP complex up to the GTP hydrolysis stage on the ribosome. The polypeptide is Elongation factor Ts (Syntrophobacter fumaroxidans (strain DSM 10017 / MPOB)).